The sequence spans 126 residues: Phosphoribosyl-AMP cyclohydrolase (126 aa).

Mg(2+) is bound at residue Asp82. Cys83 contacts Zn(2+). Positions 84 and 86 each coordinate Mg(2+). 2 residues coordinate Zn(2+): Cys99 and Cys106.

Belongs to the PRA-CH family. As to quaternary structure, homodimer. Requires Mg(2+) as cofactor. Zn(2+) is required as a cofactor.

The protein resides in the cytoplasm. The catalysed reaction is 1-(5-phospho-beta-D-ribosyl)-5'-AMP + H2O = 1-(5-phospho-beta-D-ribosyl)-5-[(5-phospho-beta-D-ribosylamino)methylideneamino]imidazole-4-carboxamide. The protein operates within amino-acid biosynthesis; L-histidine biosynthesis; L-histidine from 5-phospho-alpha-D-ribose 1-diphosphate: step 3/9. Functionally, catalyzes the hydrolysis of the adenine ring of phosphoribosyl-AMP. This is Phosphoribosyl-AMP cyclohydrolase from Sphingopyxis alaskensis (strain DSM 13593 / LMG 18877 / RB2256) (Sphingomonas alaskensis).